Consider the following 836-residue polypeptide: Pentatricopeptide repeat-containing protein At2g39620 (836 aa).

23 PPR repeats span residues 1 to 35 (MPIN…GLKP), 36 to 62 (HNQL…VRDP), 63 to 98 (GVVL…GIDP), 99 to 133 (DKYS…GLES), 134 to 164 (DVYI…MHVK), 165 to 199 (DVVT…CVDI), 200 to 230 (DHVS…VIKK), 233 to 263 (IFAF…VWRK), 264 to 298 (DESS…DVRM), 299 to 333 (NKVA…GLIG), 334 to 364 (DVSV…IEDR), 365 to 399 (DVVS…HIKP), 400 to 434 (NAVT…DIES), 435 to 465 (ELET…LPIK), 466 to 500 (DAVA…GVCP), 501 to 535 (DSRT…GFDS), 536 to 566 (ECHV…CGFE), 568 to 602 (STVS…KFQP), 603 to 637 (NAVT…GFCS), 638 to 668 (QTPV…ISNK), 669 to 703 (YIVS…ELKP), 704 to 734 (DSVS…MGER), and 740 to 770 (EVEH…MRVK). Residues 775 to 836 (VWGALLNSSR…KVPACSWIEV (62 aa)) are type E motif; degenerate.

The protein belongs to the PPR family. PCMP-E subfamily.

This Arabidopsis thaliana (Mouse-ear cress) protein is Pentatricopeptide repeat-containing protein At2g39620 (PCMP-E33).